Reading from the N-terminus, the 81-residue chain is Prophage excisionase-like protein (81 aa).

The protein to lambdoid phages excisionases.

In Escherichia coli (strain K12), this protein is Prophage excisionase-like protein (xisE).